The chain runs to 441 residues: Ribosomal protein uS12 methylthiotransferase RimO (441 aa).

The 111-residue stretch at 8–118 folds into the MTTase N-terminal domain; sequence PKIGFVSLGC…VLQHVHHYVP (111 aa). Positions 17, 53, 82, 150, 154, and 157 each coordinate [4Fe-4S] cluster. The Radical SAM core domain occupies 136–373; the sequence is LTPRHYAYLK…MQLQQQISAE (238 aa). The region spanning 376–441 is the TRAM domain; sequence QEKVGREILV…DEYDLWGSRV (66 aa).

The protein belongs to the methylthiotransferase family. RimO subfamily. Requires [4Fe-4S] cluster as cofactor.

It localises to the cytoplasm. The enzyme catalyses L-aspartate(89)-[ribosomal protein uS12]-hydrogen + (sulfur carrier)-SH + AH2 + 2 S-adenosyl-L-methionine = 3-methylsulfanyl-L-aspartate(89)-[ribosomal protein uS12]-hydrogen + (sulfur carrier)-H + 5'-deoxyadenosine + L-methionine + A + S-adenosyl-L-homocysteine + 2 H(+). In terms of biological role, catalyzes the methylthiolation of an aspartic acid residue of ribosomal protein uS12. The sequence is that of Ribosomal protein uS12 methylthiotransferase RimO from Salmonella paratyphi B (strain ATCC BAA-1250 / SPB7).